Reading from the N-terminus, the 1103-residue chain is A disintegrin and metalloproteinase with thrombospondin motifs 10 (1103 aa).

Residues 1 to 25 (MAPACQILRWALALGLGLMFEVTHA) form the signal peptide. Positions 26–233 (FRSQDEFLSS…TERGQPGLKR (208 aa)) are excised as a propeptide. N-linked (GlcNAc...) asparagine glycosylation is found at N90, N222, and N323. The disordered stretch occupies residues 213 to 233 (KPPPARPLGNETERGQPGLKR). Residues 239–457 (RYVETLVVAD…GLGLCLNNRP (219 aa)) form the Peptidase M12B domain. 11 disulfide bridges follow: C315–C376, C351–C358, C370–C452, C409–C436, C479–C501, C490–C508, C496–C531, C521–C536, C559–C596, C563–C601, and C574–C586. H392 contributes to the Zn(2+) binding site. Residue E393 is part of the active site. H396 and H402 together coordinate Zn(2+). The Disintegrin domain maps to 460-546 (QDFVYPTVAP…VPFGSRPEGV (87 aa)). The 56-residue stretch at 547–602 (DGAWGPWTPWGDCSRTCGGGVSSSSRHCDSPRPTIGGKYCLGERRRHRSCNTDDCP) folds into the TSP type-1 1 domain. The tract at residues 706–828 (ETIEGVFSPA…IARDSLPPYS (123 aa)) is spacer. N-linked (GlcNAc...) asparagine glycosylation is found at N740 and N795. TSP type-1 domains follow at residues 825-883 (PPYS…NTEP), 884-945 (CPPD…PTCP), 947-1001 (EWAA…NLRR), and 1003-1058 (PPAR…AKCD). A glycan (N-linked (GlcNAc...) asparagine) is linked at N892. Residues 1065–1103 (GPEECKDVNKVAYCPLVLKFQFCSRAYFRQMCCKTCHGH) form the PLAC domain.

In terms of assembly, interacts with FBN1; this interaction promotes microfibrils assembly. Zn(2+) is required as a cofactor. In terms of processing, glycosylated. Can be O-fucosylated by POFUT2 on a serine or a threonine residue found within the consensus sequence C1-X(2)-(S/T)-C2-G of the TSP type-1 repeat domains where C1 and C2 are the first and second cysteine residue of the repeat, respectively. Fucosylated repeats can then be further glycosylated by the addition of a beta-1,3-glucose residue by the glucosyltransferase, B3GALTL. Fucosylation mediates the efficient secretion of ADAMTS family members. Can also be C-glycosylated with one or two mannose molecules on tryptophan residues within the consensus sequence W-X-X-W of the TPRs, and N-glycosylated. These other glycosylations can also facilitate secretion. Widely expressed in adult tissues.

It is found in the secreted. The protein localises to the extracellular space. The protein resides in the extracellular matrix. Functionally, metalloprotease that participate in microfibrils assembly. Microfibrils are extracellular matrix components occurring independently or along with elastin in the formation of elastic tissues. The protein is A disintegrin and metalloproteinase with thrombospondin motifs 10 (ADAMTS10) of Homo sapiens (Human).